An 887-amino-acid chain; its full sequence is Lateral signaling target protein 2 homolog (887 aa).

Lysine 87 participates in a covalent cross-link: Glycyl lysine isopeptide (Lys-Gly) (interchain with G-Cter in ubiquitin). The disordered stretch occupies residues 308–327 (PALSAPLPPEGPLSAKAKDP). At serine 334 the chain carries Phosphoserine. 2 disordered regions span residues 354-396 (DEMS…GSDE) and 412-474 (ALAR…ASLA). Threonine 516 carries the post-translational modification Phosphothreonine. Residue serine 586 is modified to Phosphoserine; by MAP2K. The segment at 599–714 (LAKASDRAPE…THAAPQATRE (116 aa)) is disordered. Basic and acidic residues predominate over residues 602 to 612 (ASDRAPERQEE). Residues 638-648 (TSGSQVDTASG) show a composition bias toward polar residues. Composition is skewed to low complexity over residues 681–693 (SGSS…SCSS) and 700–711 (AAPAATHAAPQA). Residues 817–879 (DEACGFCTAC…THCYMFHVTP (63 aa)) form an FYVE-type zinc finger. Zn(2+) is bound by residues cysteine 823, cysteine 826, cysteine 839, cysteine 842, cysteine 847, cysteine 850, and cysteine 869. Residue threonine 870 is modified to Phosphothreonine; by MAP2K. Cysteine 872 is a binding site for Zn(2+).

This sequence belongs to the lst-2 family. Interacts with TRIM3. Post-translationally, monoubiquitination at Lys-87 prevents binding to phosphatidylinositol 3-phosphate (PI3P) and localization to early endosome membranes.

Its subcellular location is the cytoplasm. It is found in the cytosol. The protein resides in the early endosome membrane. Its function is as follows. Negative regulator of epidermal growth factor receptor (EGFR) signaling. Acts by promoting EGFR degradation in endosomes when not monoubiquitinated. This Homo sapiens (Human) protein is Lateral signaling target protein 2 homolog (ZFYVE28).